Consider the following 487-residue polypeptide: Glycogen synthase 1 (487 aa).

An ADP-alpha-D-glucose-binding site is contributed by Lys-15.

The protein belongs to the glycosyltransferase 1 family. Bacterial/plant glycogen synthase subfamily.

It carries out the reaction [(1-&gt;4)-alpha-D-glucosyl](n) + ADP-alpha-D-glucose = [(1-&gt;4)-alpha-D-glucosyl](n+1) + ADP + H(+). It functions in the pathway glycan biosynthesis; glycogen biosynthesis. In terms of biological role, synthesizes alpha-1,4-glucan chains using ADP-glucose. The protein is Glycogen synthase 1 of Nitrosococcus oceani (strain ATCC 19707 / BCRC 17464 / JCM 30415 / NCIMB 11848 / C-107).